The primary structure comprises 344 residues: AA9 family lytic polysaccharide monooxygenase D (344 aa).

An N-terminal signal peptide occupies residues 1–23; that stretch reads MKTATSYAAFLLSALAALPHASA. H24 is a binding site for Cu(2+). Cysteines 70 and 193 form a disulfide. H179 contributes to the O2 binding site. A Cu(2+)-binding site is contributed by Y190. N-linked (GlcNAc...) asparagine glycosylation is found at N201 and N207. Residues 240-321 form a disordered region; the sequence is PPLSNLVSGD…PTTSGNLSAN (82 aa). The segment covering 259 to 292 has biased composition (low complexity); that stretch reads STSSATLSGGAAPTGTASGSTPAGTSQPSSTTGT. The segment covering 311 to 320 has biased composition (polar residues); it reads APTTSGNLSA. Residue N317 is glycosylated (N-linked (GlcNAc...) asparagine).

The protein belongs to the polysaccharide monooxygenase AA9 family. It depends on Cu(2+) as a cofactor.

It is found in the secreted. It carries out the reaction [(1-&gt;4)-beta-D-glucosyl]n+m + reduced acceptor + O2 = 4-dehydro-beta-D-glucosyl-[(1-&gt;4)-beta-D-glucosyl]n-1 + [(1-&gt;4)-beta-D-glucosyl]m + acceptor + H2O.. In terms of biological role, lytic polysaccharide monooxygenase (LPMO) that depolymerizes crystalline and amorphous polysaccharides via the oxidation of scissile alpha- or beta-(1-4)-glycosidic bonds, yielding C1 or C4 oxidation products. Catalysis by LPMOs requires the reduction of the active-site copper from Cu(II) to Cu(I) by a reducing agent and H(2)O(2) or O(2) as a cosubstrate. In Gloeophyllum trabeum (strain ATCC 11539 / FP-39264 / Madison 617) (Brown rot fungus), this protein is AA9 family lytic polysaccharide monooxygenase D.